The following is a 386-amino-acid chain: Mannitol-1-phosphate 5-dehydrogenase (386 aa).

NAD(+) is bound at residue 6–17; the sequence is AIHFGGGNIGRG. Residue K214 is part of the active site.

It belongs to the mannitol dehydrogenase family. Monomer.

The catalysed reaction is D-mannitol 1-phosphate + NAD(+) = beta-D-fructose 6-phosphate + NADH + H(+). Functionally, catalyzes the NAD(H)-dependent interconversion of D-fructose 6-phosphate and D-mannitol 1-phosphate in the mannitol metabolic pathway. Plays a key role in liamocins biosynthesis by providing the mannitol moity that is linked to 3,5-dihydroxydecanoic acid (provided by the HR-PKS PKS1) via ester bond formation catalyzed by the esterase EST1. This chain is Mannitol-1-phosphate 5-dehydrogenase, found in Aureobasidium melanogenum (Aureobasidium pullulans var. melanogenum).